We begin with the raw amino-acid sequence, 583 residues long: CD166 antigen (583 aa).

Positions 1–27 (MASKAAPSCRLVFCLLISATVLRPGLG) are cleaved as a signal peptide. Ig-like V-type domains are found at residues 28 to 120 (WYTV…TEDD) and 125 to 234 (PTVV…KTVY). Residues 28–527 (WYTVNSAYGD…NKEKVNDQAK (500 aa)) lie on the Extracellular side of the membrane. Disulfide bonds link Cys43–Cys113 and Cys157–Cys220. Asn91, Asn95, Asn167, Asn265, Asn306, Asn361, Asn457, Asn480, and Asn499 each carry an N-linked (GlcNAc...) asparagine glycan. Ig-like C2-type domains follow at residues 245–328 (PTEQ…AAIT), 333–409 (DLSL…ESLT), and 416–501 (PQIK…LNVS). Disulfide bonds link Cys270-Cys313, Cys354-Cys392, and Cys435-Cys485. Residues 528–549 (LIVGIVVGLLLAALVAGVVYWL) traverse the membrane as a helical segment. Residues 550–583 (YMKKSKTASKHVNKDLGNMEENKKLEENNHKTEA) lie on the Cytoplasmic side of the membrane. The tract at residues 562 to 583 (NKDLGNMEENKKLEENNHKTEA) is disordered. Residues 569–583 (EENKKLEENNHKTEA) are compositionally biased toward basic and acidic residues.

In terms of assembly, homodimer. Interacts (via extracellular domain) with CD6 (via extracellular domain). Homodimerization and interaction with CD6 involve the same region and cannot occur simultaneously. The affinity for CD6 is much higher than the affinity for self-association. Interacts (via glycosylated extracellular domain) with LGALS1 and LGALS3. Interaction with LGALS1 or LGALS3 inhibits interaction with CD6. In terms of processing, glycosylated. In terms of tissue distribution, constitutively expressed in the autonomic nervous system. Sympathetic and parasympathetic nerve fibers but not myelinated nerve fibers in the spinal nerve.

The protein resides in the cell membrane. The protein localises to the cell projection. It is found in the axon. It localises to the dendrite. Functionally, cell adhesion molecule that mediates both heterotypic cell-cell contacts via its interaction with CD6, as well as homotypic cell-cell contacts. Promotes T-cell activation and proliferation via its interactions with CD6. Contributes to the formation and maturation of the immunological synapse via its interactions with CD6. Mediates homotypic interactions with cells that express ALCAM. Mediates attachment of dendritic cells onto endothelial cells via homotypic interaction. Inhibits endothelial cell migration and promotes endothelial tube formation via homotypic interactions. Required for normal organization of the lymph vessel network. Required for normal hematopoietic stem cell engraftment in the bone marrow. Plays a role in hematopoiesis; required for normal numbers of hematopoietic stem cells in bone marrow. Promotes in vitro osteoblast proliferation and differentiation. Promotes neurite extension, axon growth and axon guidance; axons grow preferentially on surfaces that contain ALCAM. Mediates outgrowth and pathfinding for retinal ganglion cell axons. The polypeptide is CD166 antigen (ALCAM) (Bos taurus (Bovine)).